The sequence spans 342 residues: Probable dual-specificity RNA methyltransferase RlmN (342 aa).

Glutamate 91 serves as the catalytic Proton acceptor. One can recognise a Radical SAM core domain in the interval 97–327; it reads YKHGNSICVS…TTIRREMGAD (231 aa). Cysteine 104 and cysteine 332 are joined by a disulfide. The [4Fe-4S] cluster site is built by cysteine 111, cysteine 115, and cysteine 118. Residues 158-159, serine 190, 213-215, and asparagine 289 each bind S-adenosyl-L-methionine; these read GE and SLH. The active-site S-methylcysteine intermediate is cysteine 332.

The protein belongs to the radical SAM superfamily. RlmN family. Requires [4Fe-4S] cluster as cofactor.

It localises to the cytoplasm. The enzyme catalyses adenosine(2503) in 23S rRNA + 2 reduced [2Fe-2S]-[ferredoxin] + 2 S-adenosyl-L-methionine = 2-methyladenosine(2503) in 23S rRNA + 5'-deoxyadenosine + L-methionine + 2 oxidized [2Fe-2S]-[ferredoxin] + S-adenosyl-L-homocysteine. It carries out the reaction adenosine(37) in tRNA + 2 reduced [2Fe-2S]-[ferredoxin] + 2 S-adenosyl-L-methionine = 2-methyladenosine(37) in tRNA + 5'-deoxyadenosine + L-methionine + 2 oxidized [2Fe-2S]-[ferredoxin] + S-adenosyl-L-homocysteine. In terms of biological role, specifically methylates position 2 of adenine 2503 in 23S rRNA and position 2 of adenine 37 in tRNAs. The protein is Probable dual-specificity RNA methyltransferase RlmN of Clostridium botulinum (strain ATCC 19397 / Type A).